Reading from the N-terminus, the 548-residue chain is CTP synthase (548 aa).

Residues 1–276 form an amidoligase domain region; the sequence is MPTELTDYDP…DQYVMEQLGL (276 aa). Residue Ser-25 participates in CTP binding. Ser-25 is a binding site for UTP. 26 to 31 is an ATP binding site; that stretch reads GLGKGI. Position 66 (Tyr-66) interacts with L-glutamine. Asp-83 lines the ATP pocket. Mg(2+)-binding residues include Asp-83 and Glu-151. Residues 158–160, 197–202, and Lys-233 each bind CTP; these read DIE and KTKPTQ. UTP-binding positions include 197–202 and Lys-233; that span reads KTKPTQ. The Glutamine amidotransferase type-1 domain maps to 303–541; sequence DIALVGKYAM…VETILETTDT (239 aa). Gly-363 serves as a coordination point for L-glutamine. Residue Cys-390 is the Nucleophile; for glutamine hydrolysis of the active site. L-glutamine is bound by residues 391 to 394, Glu-414, and Arg-471; that span reads LGFQ. Catalysis depends on residues His-514 and Glu-516.

The protein belongs to the CTP synthase family. Homotetramer.

The catalysed reaction is UTP + L-glutamine + ATP + H2O = CTP + L-glutamate + ADP + phosphate + 2 H(+). It carries out the reaction L-glutamine + H2O = L-glutamate + NH4(+). The enzyme catalyses UTP + NH4(+) + ATP = CTP + ADP + phosphate + 2 H(+). It participates in pyrimidine metabolism; CTP biosynthesis via de novo pathway; CTP from UDP: step 2/2. Its activity is regulated as follows. Allosterically activated by GTP, when glutamine is the substrate; GTP has no effect on the reaction when ammonia is the substrate. The allosteric effector GTP functions by stabilizing the protein conformation that binds the tetrahedral intermediate(s) formed during glutamine hydrolysis. Inhibited by the product CTP, via allosteric rather than competitive inhibition. Functionally, catalyzes the ATP-dependent amination of UTP to CTP with either L-glutamine or ammonia as the source of nitrogen. Regulates intracellular CTP levels through interactions with the four ribonucleotide triphosphates. This is CTP synthase from Natronomonas pharaonis (strain ATCC 35678 / DSM 2160 / CIP 103997 / JCM 8858 / NBRC 14720 / NCIMB 2260 / Gabara) (Halobacterium pharaonis).